The sequence spans 206 residues: Carbonic anhydrase (206 aa).

An Isoglutamyl lysine isopeptide (Lys-Gln) (interchain with Q-Cter in protein Pup) cross-link involves residue Lys-11. Zn(2+)-binding residues include Cys-51, Asp-53, His-104, and Cys-107.

Belongs to the beta-class carbonic anhydrase family. Homotetramer. It depends on Zn(2+) as a cofactor.

It catalyses the reaction hydrogencarbonate + H(+) = CO2 + H2O. Catalyzes the reversible hydration of carbon dioxide to form bicarbonate. The chain is Carbonic anhydrase (cynT) from Mycolicibacterium smegmatis (strain ATCC 700084 / mc(2)155) (Mycobacterium smegmatis).